Reading from the N-terminus, the 307-residue chain is MQYSTLAGQTDNSLVSNNFGFLRLPLNFMPYESHADWVITGVPYDMAVSGRSGARFGPEAIRRASVNLAWEHRRFPWTFDVRERLNIIDCGDLVFSFGDSRDFVEKMEAHAGKLLSSGKRCLSLGGDHFITLPLLRAHARYFGKLALIHFDAHTDTYDNGSEYDHGTMFYTAPKEGLIDPSRSVQIGIRTEHSKKLPFTVLTAPQVNEDSVEETVRKIKETVGNMPVYLTFDIDCLDPSFAPGTGTPVCGGLSSDRALKILRGLTDLDIVGMDVVEVAPSYDQSDITALAGATIALEMLYLQGAKKD.

Residues histidine 128, aspartate 151, histidine 153, aspartate 155, aspartate 232, and aspartate 234 each contribute to the Mn(2+) site.

It belongs to the arginase family. Agmatinase subfamily. Mn(2+) is required as a cofactor.

The enzyme catalyses agmatine + H2O = urea + putrescine. The protein operates within amine and polyamine biosynthesis; putrescine biosynthesis via agmatine pathway; putrescine from agmatine: step 1/1. In terms of biological role, catalyzes the formation of putrescine from agmatine. In Neisseria meningitidis serogroup C (strain 053442), this protein is Agmatinase.